The sequence spans 589 residues: Sentrin-specific protease 2 (589 aa).

Positions 28 to 31 (KRRR) match the Nuclear localization signal motif. A Phosphoserine modification is found at Ser-32. The short motif at 46–51 (PAKRPR) is the Nuclear localization signal element. The interval 71 to 382 (GFPFQLTTKP…EKEISNALGH (312 aa)) is axin-binding. 2 disordered regions span residues 148-179 (SFGF…LMWK) and 191-210 (EESG…GVQK). A Nuclear export signal motif is present at residues 317–332 (LEPDLSEEVSARLRLG). Ser-333 and Ser-344 each carry phosphoserine. Positions 395–559 (LRITRGDIQT…MFTCKYADYI (165 aa)) are protease. Active-site residues include His-478 and Asp-495. The Nucleophile role is filled by Cys-548.

Belongs to the peptidase C48 family. As to quaternary structure, binds to SUMO2 and SUMO3. Interacts with the C-terminal domain of NUP153 via its N-terminus. Interacts with MTA1. In terms of processing, polyubiquitinated; which leads to proteasomal degradation.

The protein localises to the nucleus. It localises to the nuclear pore complex. The protein resides in the nucleus membrane. Its subcellular location is the cytoplasm. In terms of biological role, protease that catalyzes two essential functions in the SUMO pathway. The first is the hydrolysis of an alpha-linked peptide bond at the C-terminal end of the small ubiquitin-like modifier (SUMO) propeptides, SUMO1, SUMO2 and SUMO3 leading to the mature form of the proteins. The second is the deconjugation of SUMO1, SUMO2 and SUMO3 from targeted proteins, by cleaving an epsilon-linked peptide bond between the C-terminal glycine of the mature SUMO and the lysine epsilon-amino group of the target protein. May down-regulate CTNNB1 levels and thereby modulate the Wnt pathway. Deconjugates SUMO2 from MTA1. Plays a dynamic role in adipogenesis by desumoylating and promoting the stabilization of CEBPB. Acts as a regulator of the cGAS-STING pathway by catalyzing desumoylation of CGAS and STING1 during the late phase of viral infection. This is Sentrin-specific protease 2 (SENP2) from Pongo abelii (Sumatran orangutan).